A 322-amino-acid chain; its full sequence is Ig gamma-2A chain C region (322 aa).

Ig-like domains lie at 6–98, 115–212, and 221–317; these read PSVY…KKIV, VFIF…KSIS, and PQVY…KSLS. 3 disulfides stabilise this stretch: Cys27-Cys82, Cys136-Cys196, and Cys242-Cys300. N-linked (GlcNAc...) asparagine glycosylation is present at Asn172.

The polypeptide is Ig gamma-2A chain C region (Igg-2a) (Rattus norvegicus (Rat)).